We begin with the raw amino-acid sequence, 216 residues long: Refilin-A (216 aa).

The interval 1–83 is disordered; that stretch reads MVGHLHLQGM…LPNPPASEMR (83 aa). Over residues 12–22 the composition is skewed to basic and acidic residues; sequence DSLKEQGREGL. Residues 29-39 are compositionally biased toward pro residues; the sequence is GLPPSPSPSPP. The segment covering 57–71 has biased composition (low complexity); the sequence is ASSEPPGPSEARAPP. An Asymmetric dimethylarginine modification is found at Arg163.

It belongs to the Refilin family. As to quaternary structure, interacts with FLNA and FLNB.

The protein resides in the cytoplasm. Its subcellular location is the cytoskeleton. Involved in the regulation of the perinuclear actin network and nuclear shape through interaction with filamins. Plays an essential role in actin cytoskeleton formation in developing cartilaginous cells. The protein is Refilin-A of Homo sapiens (Human).